A 144-amino-acid polypeptide reads, in one-letter code: Maximins 7/H6 (144 aa).

An N-terminal signal peptide occupies residues 1-18 (MNFKYIVAVSFLIASAYA). Positions 19-43 (RSEENDEQSLSQRDILEEESLREIR) are excised as a propeptide. Position 70 is an asparagine amide (asparagine 70). The propeptide occupies 74–123 (TAEDHEVMKRLEAVMRDLDSLDYPEEAAERETRGFNQEEIANLFTKKEKR). A Leucine amide modification is found at leucine 143.

The protein belongs to the bombinin family. In terms of tissue distribution, expressed by the skin glands.

It is found in the secreted. Maximin-7 shows antimicrobial activity against bacteria and against the fungus C.albicans. It has little hemolytic activity. In terms of biological role, maximin-H6 shows antimicrobial activity against bacteria and against the fungus C.albicans. Shows strong hemolytic activity. In Bombina maxima (Giant fire-bellied toad), this protein is Maximins 7/H6.